Consider the following 345-residue polypeptide: MSNAYKEAGVDIEAGYEAVNRMKRHVERTARKGVLGGLGGFGGNFDLSTLGLKEPVLVSGTDGVGTKLMIAFMANKHDTIGQDAVAMCVNDIVVQGAEPLYFLDYLACGKAVPEKIEAIVKGVADGCEIAGCALIGGETAEMPGMYEEDEYDLAGFSVGAVEKKDLLTGEHIQAGDVLIGLPSSGLHSNGFSLVRKVLLQDAGLTLQTECATLGKTLGEELLTPTKIYVKPLLACLKQGLLAGAAHITGGGFYENIPRMLPKGVGIHIDYGSWPIPPIFSLIQEKGGLSEQDLFHTFNMGIGMVLAVPEDKHQQALATLEANGEDAYIIGRVTPTEGTVIGGIGA.

Belongs to the AIR synthase family.

The protein localises to the cytoplasm. The enzyme catalyses 2-formamido-N(1)-(5-O-phospho-beta-D-ribosyl)acetamidine + ATP = 5-amino-1-(5-phospho-beta-D-ribosyl)imidazole + ADP + phosphate + H(+). It functions in the pathway purine metabolism; IMP biosynthesis via de novo pathway; 5-amino-1-(5-phospho-D-ribosyl)imidazole from N(2)-formyl-N(1)-(5-phospho-D-ribosyl)glycinamide: step 2/2. This chain is Phosphoribosylformylglycinamidine cyclo-ligase, found in Shouchella clausii (strain KSM-K16) (Alkalihalobacillus clausii).